A 234-amino-acid polypeptide reads, in one-letter code: tRNA (guanine-N(1)-)-methyltransferase (234 aa).

S-adenosyl-L-methionine contacts are provided by residues G110 and 134 to 139; that span reads IGDYVL.

This sequence belongs to the RNA methyltransferase TrmD family. As to quaternary structure, homodimer.

The protein localises to the cytoplasm. It catalyses the reaction guanosine(37) in tRNA + S-adenosyl-L-methionine = N(1)-methylguanosine(37) in tRNA + S-adenosyl-L-homocysteine + H(+). Specifically methylates guanosine-37 in various tRNAs. This chain is tRNA (guanine-N(1)-)-methyltransferase, found in Tropheryma whipplei (strain TW08/27) (Whipple's bacillus).